We begin with the raw amino-acid sequence, 269 residues long: 2-heptyl-3-hydroxy-4(1H)-quinolone dioxygenase (269 aa).

Histidine 97 contacts substrate. The active-site Proton donor/acceptor is the histidine 246.

The protein belongs to the AB hydrolase superfamily. Monomer.

It carries out the reaction 2-heptyl-3-hydroxy-4(1H)-quinolone + O2 = N-octanoylanthranilate + CO + H(+). Functionally, ring-cleaving dioxygenase involved in the degradation pathway of the Pseudomonas aeruginosa quorum sensing signal molecules HHQ (2-heptyl-4-quinolone) and PQS (2-heptyl-3-hydroxy-4(1H)-quinolone) to anthranilate. Catalyzes the cleavage of PQS to form N-octanoylanthranilate and carbon monoxide. Thus, leads to the inactivation of PQS that plays a central role in the regulation of virulence factor production by P.aeruginosa, thereby quenching the production of antimicrobials, which may contribute to the competitiveness of M.abscessus in presence of P.aeruginosa. In vitro, can also use other 2-alkyl-3-hydroxy-4(1H)-quinolone (AHQ) substrates with shorter alkyl substituents at C2, but with lower efficiency. This Mycobacteroides abscessus (strain ATCC 19977 / DSM 44196 / CCUG 20993 / CIP 104536 / JCM 13569 / NCTC 13031 / TMC 1543 / L948) (Mycobacterium abscessus) protein is 2-heptyl-3-hydroxy-4(1H)-quinolone dioxygenase.